The primary structure comprises 735 residues: Phosphoribosylformylglycinamidine synthase subunit PurL (735 aa).

His48 is a catalytic residue. ATP contacts are provided by Tyr51 and Lys90. Mg(2+) is bound at residue Glu92. Residues 93–96 (SHNH) and Arg115 each bind substrate. His94 serves as the catalytic Proton acceptor. Residue Asp116 participates in Mg(2+) binding. Gln239 is a binding site for substrate. Asp267 lines the Mg(2+) pocket. Substrate is bound at residue 311-313 (ESQ). 2 residues coordinate ATP: Asp492 and Gly529. Asn530 provides a ligand contact to Mg(2+). Ser532 contributes to the substrate binding site.

The protein belongs to the FGAMS family. In terms of assembly, monomer. Part of the FGAM synthase complex composed of 1 PurL, 1 PurQ and 2 PurS subunits.

Its subcellular location is the cytoplasm. It catalyses the reaction N(2)-formyl-N(1)-(5-phospho-beta-D-ribosyl)glycinamide + L-glutamine + ATP + H2O = 2-formamido-N(1)-(5-O-phospho-beta-D-ribosyl)acetamidine + L-glutamate + ADP + phosphate + H(+). It functions in the pathway purine metabolism; IMP biosynthesis via de novo pathway; 5-amino-1-(5-phospho-D-ribosyl)imidazole from N(2)-formyl-N(1)-(5-phospho-D-ribosyl)glycinamide: step 1/2. Its function is as follows. Part of the phosphoribosylformylglycinamidine synthase complex involved in the purines biosynthetic pathway. Catalyzes the ATP-dependent conversion of formylglycinamide ribonucleotide (FGAR) and glutamine to yield formylglycinamidine ribonucleotide (FGAM) and glutamate. The FGAM synthase complex is composed of three subunits. PurQ produces an ammonia molecule by converting glutamine to glutamate. PurL transfers the ammonia molecule to FGAR to form FGAM in an ATP-dependent manner. PurS interacts with PurQ and PurL and is thought to assist in the transfer of the ammonia molecule from PurQ to PurL. This is Phosphoribosylformylglycinamidine synthase subunit PurL from Bradyrhizobium sp. (strain BTAi1 / ATCC BAA-1182).